The primary structure comprises 441 residues: UDP-N-acetylglucosamine 1-carboxyvinyltransferase 1 (441 aa).

Residue Lys42–Asn43 coordinates phosphoenolpyruvate. Arg117 contributes to the UDP-N-acetyl-alpha-D-glucosamine binding site. The active-site Proton donor is the Cys141. Position 141 is a 2-(S-cysteinyl)pyruvic acid O-phosphothioketal (Cys141). UDP-N-acetyl-alpha-D-glucosamine is bound by residues Asp330 and Ile352.

This sequence belongs to the EPSP synthase family. MurA subfamily.

Its subcellular location is the cytoplasm. The catalysed reaction is phosphoenolpyruvate + UDP-N-acetyl-alpha-D-glucosamine = UDP-N-acetyl-3-O-(1-carboxyvinyl)-alpha-D-glucosamine + phosphate. It participates in cell wall biogenesis; peptidoglycan biosynthesis. In terms of biological role, cell wall formation. Adds enolpyruvyl to UDP-N-acetylglucosamine. This is UDP-N-acetylglucosamine 1-carboxyvinyltransferase 1 from Symbiobacterium thermophilum (strain DSM 24528 / JCM 14929 / IAM 14863 / T).